Here is an 887-residue protein sequence, read N- to C-terminus: Semaphorin-6B (887 aa).

A signal peptide spans 1–26 (MWTPRAPPPRPALLFLLLLLLRVTHG). Residues 27-605 (LFPDEPPPLS…VSVNLLVTSS (579 aa)) are Extracellular-facing. One can recognise a Sema domain in the interval 32-525 (PPPLSVAPRD…FPRCVVRVPV (494 aa)). N-linked (GlcNAc...) asparagine glycosylation is present at Asn75. Disulfide bonds link Cys117–Cys127 and Cys145–Cys154. Residues Asn156, Asn168, and Asn292 are each glycosylated (N-linked (GlcNAc...) asparagine). 2 disulfide bridges follow: Cys268/Cys379 and Cys293/Cys338. Residues Asn387, Asn442, and Asn463 are each glycosylated (N-linked (GlcNAc...) asparagine). Disulfide bonds link Cys487–Cys519, Cys528–Cys546, Cys534–Cys580, and Cys538–Cys554. The helical transmembrane segment at 606–626 (VAAFVVGAVVSGFSVGWFVGL) threads the bilayer. The Cytoplasmic portion of the chain corresponds to 627–887 (RERRELARRK…TGERTAPPVP (261 aa)). Disordered regions lie at residues 656–675 (LGER…GGPG), 697–717 (HGGP…TPLP), and 759–887 (APEQ…PPVP). Residues 662-674 (TGTGGRGGAGGGP) show a composition bias toward gly residues. An Omega-N-methylarginine modification is found at Arg667. Positions 707-717 (LLPTPEQTPLP) are enriched in low complexity.

This sequence belongs to the semaphorin family.

The protein localises to the cell membrane. Its function is as follows. Functions as a cell surface repellent for mossy fibers of developing neurons in the hippocampus where it plays a role in axon guidance. May function through the PLXNA4 receptor expressed by mossy cell axons. This Rattus norvegicus (Rat) protein is Semaphorin-6B (Sema6b).